Consider the following 395-residue polypeptide: Phosphoprotein (395 aa).

Disordered stretches follow at residues 31 to 109 (VETV…DTQL) and 126 to 214 (NKSS…PASV). Positions 65–74 (TPDRQNRSDK) are enriched in basic and acidic residues. Polar residues-rich tracts occupy residues 75-98 (QPST…QPPT), 146-168 (LPTQ…QNRA), and 203-212 (SGQSQDNTPA). The segment at 222-285 (DFVQAMMSMM…LGMMKILDPG (64 aa)) is multimerization.

This sequence belongs to the rubulavirus/avulavirus P protein family. Homotetramer. Interacts (via multimerization domain) with polymerase L; this interaction forms the polymerase L-P complex. Interacts (via N-terminus) with N0 (via Ncore); this interaction allows P to chaperon N0 to avoid N polymerization before encapsidation. Interacts (via C-terminus) with N-RNA template; this interaction positions the polymerase on the template for both transcription and replication.

In terms of biological role, essential cofactor of the RNA polymerase L that plays a central role in the transcription and replication by forming the polymerase complex with RNA polymerase L and recruiting L to the genomic N-RNA template for RNA synthesis. Also plays a central role in the encapsidation of nascent RNA chains by forming the encapsidation complex with the nucleocapsid protein N (N-P complex). Acts as a chaperone for newly synthesized free N protein, so-called N0, allowing encapsidation of nascent RNA chains during replication. The nucleoprotein protein N prevents excessive phosphorylation of P, which leads to down-regulation of viral transcription/ replication. Participates, together with N, in the formation of viral factories (viroplasms), which are large inclusions in the host cytoplasm where replication takes place. This Gallus gallus (Chicken) protein is Phosphoprotein (P/C).